The chain runs to 238 residues: Orotidine 5'-phosphate decarboxylase (238 aa).

Substrate-binding positions include Asp10, Lys32, 59–68 (DLKLHDIPNT), Thr122, Arg184, Gln193, Gly213, and Arg214. The Proton donor role is filled by Lys61.

It belongs to the OMP decarboxylase family. Type 1 subfamily. As to quaternary structure, homodimer.

The catalysed reaction is orotidine 5'-phosphate + H(+) = UMP + CO2. The protein operates within pyrimidine metabolism; UMP biosynthesis via de novo pathway; UMP from orotate: step 2/2. Catalyzes the decarboxylation of orotidine 5'-monophosphate (OMP) to uridine 5'-monophosphate (UMP). The polypeptide is Orotidine 5'-phosphate decarboxylase (Bacillus cereus (strain ATCC 10987 / NRS 248)).